A 132-amino-acid chain; its full sequence is Myelin P2 protein (132 aa).

The residue at position 2 (serine 2) is an N-acetylserine. Arginine 107 serves as a coordination point for (9Z)-octadecenoate. A hexadecanoate-binding site is contributed by arginine 107. Cysteine 118 and cysteine 125 are oxidised to a cystine. Residue arginine 127–tyrosine 129 coordinates (9Z)-octadecenoate. Arginine 127–tyrosine 129 is a binding site for hexadecanoate.

Belongs to the calycin superfamily. Fatty-acid binding protein (FABP) family. As to quaternary structure, monomer.

The protein localises to the cytoplasm. May play a role in lipid transport protein in Schwann cells. May bind cholesterol. The polypeptide is Myelin P2 protein (Sus scrofa (Pig)).